A 147-amino-acid chain; its full sequence is UPF0306 protein YhbP (147 aa).

Belongs to the UPF0306 family.

This is UPF0306 protein YhbP from Escherichia coli O6:K15:H31 (strain 536 / UPEC).